The sequence spans 580 residues: Phosphatase and actin regulator 1 (580 aa).

Phosphoserine occurs at positions 67 and 78. Thr-104 carries the post-translational modification Phosphothreonine. A Nuclear localization signal motif is present at residues 108–129 (RRRSKFANLGRIFKPWKWRKKK). Residues 138–163 (AALERKISMRQSREELIKRGVLKEIY) form an RPEL 1 repeat. 2 disordered regions span residues 331–355 (EQRVPCSTSYHSSGLHSGDGVTKAG) and 376–410 (KENVPHESDYEDSSCLYTREEEEEEEDEDDDSSLY). Polar residues predominate over residues 335–345 (PCSTSYHSSGL). The segment covering 395 to 407 (EEEEEEEDEDDDS) has biased composition (acidic residues). RPEL repeat units lie at residues 422-447 (DSLAIKLSNRPSKRELEEKNILPRQT), 460-484 (TKLTRRLSQRPTAEELEQRNILKPR), and 498-523 (RRLTRKLSQRPTVEELRERKILIRFS). Positions 462-494 (LTRRLSQRPTAEELEQRNILKPRNEQEEQEEKR) are disordered. Position 467 is a phosphoserine (Ser-467). Basic and acidic residues predominate over residues 471–494 (TAEELEQRNILKPRNEQEEQEEKR). Ser-505 is modified (phosphoserine).

This sequence belongs to the phosphatase and actin regulator family. As to quaternary structure, interacts (via RPEL repeats) with ACTA1 and PPP1CA; ACTA1 and PPP1CA compete for the same binding site. In terms of tissue distribution, detected in umbilical vein endothelial cells.

Its subcellular location is the cytoplasm. It is found in the synapse. The protein localises to the nucleus. Functionally, binds actin monomers (G actin) and plays a role in multiple processes including the regulation of actin cytoskeleton dynamics, actin stress fibers formation, cell motility and survival, formation of tubules by endothelial cells, and regulation of PPP1CA activity. Involved in the regulation of cortical neuron migration and dendrite arborization. The protein is Phosphatase and actin regulator 1 (PHACTR1) of Homo sapiens (Human).